Here is a 341-residue protein sequence, read N- to C-terminus: L-threonine 3-dehydrogenase (341 aa).

C38 contacts Zn(2+). Active-site charge relay system residues include T40 and H43. Positions 63, 64, 93, 96, 99, and 107 each coordinate Zn(2+). NAD(+) contacts are provided by residues I175, D195, R200, L262–I264, and I286–Y287.

The protein belongs to the zinc-containing alcohol dehydrogenase family. As to quaternary structure, homotetramer. Requires Zn(2+) as cofactor.

The protein localises to the cytoplasm. It catalyses the reaction L-threonine + NAD(+) = (2S)-2-amino-3-oxobutanoate + NADH + H(+). The protein operates within amino-acid degradation; L-threonine degradation via oxydo-reductase pathway; glycine from L-threonine: step 1/2. Catalyzes the NAD(+)-dependent oxidation of L-threonine to 2-amino-3-ketobutyrate. The polypeptide is L-threonine 3-dehydrogenase (Edwardsiella ictaluri (strain 93-146)).